The following is a 318-amino-acid chain: 4-hydroxy-3-methylbut-2-enyl diphosphate reductase (318 aa).

Cys12 lines the [4Fe-4S] cluster pocket. Positions 41 and 74 each coordinate (2E)-4-hydroxy-3-methylbut-2-enyl diphosphate. Residues His41 and His74 each coordinate dimethylallyl diphosphate. The isopentenyl diphosphate site is built by His41 and His74. Cys96 lines the [4Fe-4S] cluster pocket. His124 is a binding site for (2E)-4-hydroxy-3-methylbut-2-enyl diphosphate. His124 is a dimethylallyl diphosphate binding site. His124 contributes to the isopentenyl diphosphate binding site. The active-site Proton donor is the Glu126. Residue Thr167 coordinates (2E)-4-hydroxy-3-methylbut-2-enyl diphosphate. Cys197 contacts [4Fe-4S] cluster. The (2E)-4-hydroxy-3-methylbut-2-enyl diphosphate site is built by Ser225, Ser226, Asn227, and Ser269. Positions 225, 226, 227, and 269 each coordinate dimethylallyl diphosphate. Residues Ser225, Ser226, Asn227, and Ser269 each contribute to the isopentenyl diphosphate site.

It belongs to the IspH family. [4Fe-4S] cluster is required as a cofactor.

The enzyme catalyses isopentenyl diphosphate + 2 oxidized [2Fe-2S]-[ferredoxin] + H2O = (2E)-4-hydroxy-3-methylbut-2-enyl diphosphate + 2 reduced [2Fe-2S]-[ferredoxin] + 2 H(+). It catalyses the reaction dimethylallyl diphosphate + 2 oxidized [2Fe-2S]-[ferredoxin] + H2O = (2E)-4-hydroxy-3-methylbut-2-enyl diphosphate + 2 reduced [2Fe-2S]-[ferredoxin] + 2 H(+). It functions in the pathway isoprenoid biosynthesis; dimethylallyl diphosphate biosynthesis; dimethylallyl diphosphate from (2E)-4-hydroxy-3-methylbutenyl diphosphate: step 1/1. It participates in isoprenoid biosynthesis; isopentenyl diphosphate biosynthesis via DXP pathway; isopentenyl diphosphate from 1-deoxy-D-xylulose 5-phosphate: step 6/6. Its function is as follows. Catalyzes the conversion of 1-hydroxy-2-methyl-2-(E)-butenyl 4-diphosphate (HMBPP) into a mixture of isopentenyl diphosphate (IPP) and dimethylallyl diphosphate (DMAPP). Acts in the terminal step of the DOXP/MEP pathway for isoprenoid precursor biosynthesis. The sequence is that of 4-hydroxy-3-methylbut-2-enyl diphosphate reductase from Francisella tularensis subsp. mediasiatica (strain FSC147).